We begin with the raw amino-acid sequence, 79 residues long: Cell division protein ZapB (79 aa).

The stretch at 1 to 78 (MSLEALDQLQ…LNSLLGKMDD (78 aa)) forms a coiled coil.

It belongs to the ZapB family. Homodimer. The ends of the coiled-coil dimer bind to each other, forming polymers. Interacts with FtsZ.

The protein localises to the cytoplasm. In terms of biological role, non-essential, abundant cell division factor that is required for proper Z-ring formation. It is recruited early to the divisome by direct interaction with FtsZ, stimulating Z-ring assembly and thereby promoting cell division earlier in the cell cycle. Its recruitment to the Z-ring requires functional FtsA or ZipA. This chain is Cell division protein ZapB, found in Hamiltonella defensa subsp. Acyrthosiphon pisum (strain 5AT).